The primary structure comprises 628 residues: tRNA uridine 5-carboxymethylaminomethyl modification enzyme MnmG (628 aa).

13–18 (GAGHAG) is a binding site for FAD. 281–295 (GARYCPSIEDKIKKF) contacts NAD(+).

This sequence belongs to the MnmG family. In terms of assembly, homodimer. Heterotetramer of two MnmE and two MnmG subunits. The cofactor is FAD.

The protein resides in the cytoplasm. NAD-binding protein involved in the addition of a carboxymethylaminomethyl (cmnm) group at the wobble position (U34) of certain tRNAs, forming tRNA-cmnm(5)s(2)U34. This Treponema denticola (strain ATCC 35405 / DSM 14222 / CIP 103919 / JCM 8153 / KCTC 15104) protein is tRNA uridine 5-carboxymethylaminomethyl modification enzyme MnmG.